Consider the following 148-residue polypeptide: SPbeta prophage-derived uncharacterized protein YomK (148 aa).

2 consecutive transmembrane segments (helical) span residues 72-92 (WGIGSLILGTSFIGFQVLFGV) and 104-124 (NALIYVLITIIICLWTLRNII).

Its subcellular location is the cell membrane. The chain is SPbeta prophage-derived uncharacterized protein YomK (yomK) from Bacillus subtilis (strain 168).